Consider the following 645-residue polypeptide: tRNA 5-methylaminomethyl-2-thiouridine biosynthesis bifunctional protein MnmC (645 aa).

Residues 1 to 230 (MPMSEPIDWL…KRHNLHAVFD (230 aa)) form a tRNA (mnm(5)s(2)U34)-methyltransferase region. The segment at 254 to 645 (LGAGIAGAAA…LASERLGRRR (392 aa)) is FAD-dependent cmnm(5)s(2)U34 oxidoreductase.

This sequence in the N-terminal section; belongs to the methyltransferase superfamily. tRNA (mnm(5)s(2)U34)-methyltransferase family. In the C-terminal section; belongs to the DAO family. The cofactor is FAD.

Its subcellular location is the cytoplasm. It catalyses the reaction 5-aminomethyl-2-thiouridine(34) in tRNA + S-adenosyl-L-methionine = 5-methylaminomethyl-2-thiouridine(34) in tRNA + S-adenosyl-L-homocysteine + H(+). Its function is as follows. Catalyzes the last two steps in the biosynthesis of 5-methylaminomethyl-2-thiouridine (mnm(5)s(2)U) at the wobble position (U34) in tRNA. Catalyzes the FAD-dependent demodification of cmnm(5)s(2)U34 to nm(5)s(2)U34, followed by the transfer of a methyl group from S-adenosyl-L-methionine to nm(5)s(2)U34, to form mnm(5)s(2)U34. The polypeptide is tRNA 5-methylaminomethyl-2-thiouridine biosynthesis bifunctional protein MnmC (Delftia acidovorans (strain DSM 14801 / SPH-1)).